The sequence spans 393 residues: S-adenosylmethionine synthase (393 aa).

H17 is an ATP binding site. D19 is a binding site for Mg(2+). Position 45 (E45) interacts with K(+). The L-methionine site is built by E58 and Q106. Residues Q106–A116 form a flexible loop region. ATP contacts are provided by residues D171 to K173, D246, R252 to K253, A269, and K273. D246 lines the L-methionine pocket. Residue K277 coordinates L-methionine.

This sequence belongs to the AdoMet synthase family. In terms of assembly, homotetramer; dimer of dimers. It depends on Mg(2+) as a cofactor. The cofactor is K(+).

It is found in the cytoplasm. The enzyme catalyses L-methionine + ATP + H2O = S-adenosyl-L-methionine + phosphate + diphosphate. It participates in amino-acid biosynthesis; S-adenosyl-L-methionine biosynthesis; S-adenosyl-L-methionine from L-methionine: step 1/1. Functionally, catalyzes the formation of S-adenosylmethionine (AdoMet) from methionine and ATP. The overall synthetic reaction is composed of two sequential steps, AdoMet formation and the subsequent tripolyphosphate hydrolysis which occurs prior to release of AdoMet from the enzyme. This chain is S-adenosylmethionine synthase, found in Roseobacter denitrificans (strain ATCC 33942 / OCh 114) (Erythrobacter sp. (strain OCh 114)).